A 746-amino-acid polypeptide reads, in one-letter code: MASEVIVISDHARKEAGTVSVFPVLIHTDYARVIEDVRKVEDQFNSEMKTSIDTKTTADFPELGLAHVTAFTIPYCRPDRLSIMTRLTEITFFNDDYYDDAGVEKILDYNNHLRECFGGRAEDELTKASAVTKSKQLQASVLVEMHYIDSELARDMMLTYNRILEVTSLGKNAGLKSLDEYLPFRIGNSGIEVYQDMSCFGMGVKLTKEEKEKLDPIVIAAHNSTTLINDYHSWPKEVRKYFNEVQATGKADLPVNAVCIFMQTEGLSEQASRQRVREEIIAQQKSHLAMIQDLVEQEGPLPEKYYMYFKAAQYTASGSEYWAAITSRYPTKTELNQPEVIIVDGELKYESSEIQQTPKQIATTFNGIPESAKSIIESKVNGTSAHIPDIRHSPADGAQTHHLISDGQFREVINGHANVHTNGKANGTSQGEDLEVYEVTTGNFQRAPEDTVLAPYQYIASLPSKNIRNKFIDALNLWLGVPPLALSSIKRIVEYLHHSSLMLDDIEDNSTLRRGKPCTHMLYGNAQTINAANYAFVSAFAEVQNLQSPSAITIFIREVQNMHRGQSLDLSWKYHTHCPTVDEYMMMVDNKTGAMFRLCVQLMQAESSVPCQKITQSDFITQLGRYFQIRDDYQNLVSSEYTTQKGFCEDLDEGKISLPLIYTIMDSSPEASVVKGIFHHRLREGGLPLHLKEYILSQMEEKGALSATHSLLQKMQKELIEGLHRVEETFGSKNALVELMLRRLWV.

Residues 1–336 (MASEVIVISD…SRYPTKTELN (336 aa)) are sesterterpenoid synthase. Asp-95 serves as a coordination point for Mg(2+). The geranylfarnesyl diphosphate synthase stretch occupies residues 338-746 (PEVIIVDGEL…VELMLRRLWV (409 aa)). Residues Lys-465, Arg-468, and His-497 each contribute to the isopentenyl diphosphate site. The Mg(2+) site is built by Asp-504 and Asp-508. Residue Arg-513 participates in dimethylallyl diphosphate binding. Arg-514 provides a ligand contact to isopentenyl diphosphate. Dimethylallyl diphosphate-binding residues include Lys-591, Thr-592, Gln-628, Asn-635, and Lys-645.

This sequence in the N-terminal section; belongs to the terpene synthase family. It in the C-terminal section; belongs to the FPP/GGPP synthase family. Requires Mg(2+) as cofactor.

The catalysed reaction is isopentenyl diphosphate + (2E,6E)-farnesyl diphosphate = (2E,6E,10E)-geranylgeranyl diphosphate + diphosphate. It catalyses the reaction (2E,6E,10E,14E)-geranylfarnesyl diphosphate = quiannulatene + diphosphate. It functions in the pathway secondary metabolite biosynthesis; terpenoid biosynthesis. Bifunctional sesterterpene synthase; part of the gene cluster that mediates the biosynthesis of the pentacyclic sesterterpene quiannulatic acid. The first step of the pathway is performed by the sesterterpene synthase (QS) that possesses both prenyl transferase and terpene cyclase activity, converting isopentenyl diphosphate and dimethylallyl diphosphate into geranylfarnesyl diphosphate (GFPP) and further converting GFPP into quiannulatene via an unprecedented cyclization mode which involves three rounds of hydride shifts and two successive C-C bond migrations to construct the 5-6-5-5-5 fused ring. The cytochrome P450 monooxygenase Qnn-P450 then oxidizes quiannulatene at C-19 in 3 successive reactions to afford quiannulatic acid. In Emericella variicolor (Aspergillus stellatus), this protein is Quiannulatene synthase.